A 165-amino-acid polypeptide reads, in one-letter code: Nascent polypeptide-associated complex subunit beta (165 aa).

Positions 33–97 constitute an NAC-A/B domain; the sequence is TTDDKRLQST…PQTKKLQDIL (65 aa). Residues 120–165 form a disordered region; it reads QKQAPGAGDVPATIQEEDDDDDVPDLVVGETFETPATEEAPKAAAS. Positions 134-143 are enriched in acidic residues; that stretch reads QEEDDDDDVP. The segment covering 144–165 has biased composition (low complexity); sequence DLVVGETFETPATEEAPKAAAS.

This sequence belongs to the NAC-beta family. Part of the nascent polypeptide-associated complex (NAC).

In Arabidopsis thaliana (Mouse-ear cress), this protein is Nascent polypeptide-associated complex subunit beta.